A 361-amino-acid chain; its full sequence is MISNYDITDSKSSSKVLRPPGGGSSDIFGSDMPQTPRNVKNRMVSNIFSVEKDNSVKNTVRQGAHRFYFIGDNPRRGQKPVDSHSRLFGEPMRPITPGKNHMKSSIPFGQNTETAAAAQKLLTNGSSTANTTNGHQYNGKSGSVSSASSSVSSSTENLKMNSGSRSVYIRNMSNNEKSKQTKTDTAGCPLTPVASAAAPPPADVLGIDLPCLDLEVGDVPKDNEIYTETGKHDVNIQTRRDSGSNVEQPHSLEKMRSTANLKEPLALCPDYVKEVHGPCNARNPITGLGLNGDGVGGLKPVKQKIREGNPVTGEGYRAGGTDYIKAAGSTNSGSVGNGDNGGNSVVNKNRVPPGGYSSGLW.

Residues 1–15 (MISNYDITDSKSSSK) show a composition bias toward polar residues. Disordered regions lie at residues 1–38 (MISN…TPRN) and 70–99 (IGDN…TPGK). Position 24 is a phosphoserine (Ser24). Thr35 is subject to Phosphothreonine. The span at 73-87 (NPRRGQKPVDSHSRL) shows a compositional bias: basic and acidic residues. Thr96 is subject to Phosphothreonine. At Ser105 the chain carries Phosphoserine. Composition is skewed to low complexity over residues 125–134 (GSSTANTTNG) and 141–154 (SGSV…VSSS). Disordered stretches follow at residues 125–165 (GSST…SGSR) and 328–361 (GSTN…SGLW). A phosphoserine mark is found at Ser143 and Ser154. Positions 155-165 (TENLKMNSGSR) are enriched in polar residues.

This sequence belongs to the MAP Jupiter family.

It is found in the nucleus. The protein localises to the cytoplasm. Its subcellular location is the cytoskeleton. It localises to the spindle. In terms of biological role, binds to all microtubule populations. The protein is Microtubule-associated protein Jupiter of Drosophila persimilis (Fruit fly).